Here is a 203-residue protein sequence, read N- to C-terminus: A-type ATP synthase subunit E (203 aa).

It belongs to the V-ATPase E subunit family. As to quaternary structure, has multiple subunits with at least A(3), B(3), C, D, E, F, H, I and proteolipid K(x).

It localises to the cell membrane. In terms of biological role, component of the A-type ATP synthase that produces ATP from ADP in the presence of a proton gradient across the membrane. The sequence is that of A-type ATP synthase subunit E from Methanococcus vannielii (strain ATCC 35089 / DSM 1224 / JCM 13029 / OCM 148 / SB).